Reading from the N-terminus, the 327-residue chain is Phenylalanine--tRNA ligase alpha subunit (327 aa).

Glutamate 252 serves as a coordination point for Mg(2+).

This sequence belongs to the class-II aminoacyl-tRNA synthetase family. Phe-tRNA synthetase alpha subunit type 1 subfamily. As to quaternary structure, tetramer of two alpha and two beta subunits. Mg(2+) serves as cofactor.

It is found in the cytoplasm. It catalyses the reaction tRNA(Phe) + L-phenylalanine + ATP = L-phenylalanyl-tRNA(Phe) + AMP + diphosphate + H(+). The chain is Phenylalanine--tRNA ligase alpha subunit from Haemophilus ducreyi (strain 35000HP / ATCC 700724).